The primary structure comprises 480 residues: tRNA-2-methylthio-N(6)-dimethylallyladenosine synthase (480 aa).

An MTTase N-terminal domain is found at K43–D161. Residues C52, C88, C122, C198, C202, and C205 each coordinate [4Fe-4S] cluster. The Radical SAM core domain occupies R184 to E414. Residues D417–R480 form the TRAM domain.

The protein belongs to the methylthiotransferase family. MiaB subfamily. As to quaternary structure, monomer. The cofactor is [4Fe-4S] cluster.

It is found in the cytoplasm. The enzyme catalyses N(6)-dimethylallyladenosine(37) in tRNA + (sulfur carrier)-SH + AH2 + 2 S-adenosyl-L-methionine = 2-methylsulfanyl-N(6)-dimethylallyladenosine(37) in tRNA + (sulfur carrier)-H + 5'-deoxyadenosine + L-methionine + A + S-adenosyl-L-homocysteine + 2 H(+). Functionally, catalyzes the methylthiolation of N6-(dimethylallyl)adenosine (i(6)A), leading to the formation of 2-methylthio-N6-(dimethylallyl)adenosine (ms(2)i(6)A) at position 37 in tRNAs that read codons beginning with uridine. This is tRNA-2-methylthio-N(6)-dimethylallyladenosine synthase from Acetivibrio thermocellus (strain ATCC 27405 / DSM 1237 / JCM 9322 / NBRC 103400 / NCIMB 10682 / NRRL B-4536 / VPI 7372) (Clostridium thermocellum).